A 273-amino-acid chain; its full sequence is Proteasome subunit beta type-10 (273 aa).

Methionine 1 is subject to N-acetylmethionine. Positions 1-39 (MQKTVLEPQRGFSFENCERNAALQRALPGLRVPHARKTG) are cleaved as a propeptide — removed in mature form. Threonine 40 acts as the Nucleophile in catalysis. Serine 230 carries the post-translational modification Phosphoserine.

The protein belongs to the peptidase T1B family. The 26S proteasome consists of a 20S proteasome core and two 19S regulatory subunits. The 20S proteasome core is composed of 28 subunits that are arranged in four stacked rings, resulting in a barrel-shaped structure. The two end rings are each formed by seven alpha subunits, and the two central rings are each formed by seven beta subunits. The catalytic chamber with the active sites is on the inside of the barrel. Component of the immunoproteasome, where it displaces the equivalent housekeeping subunit PSMB7. Component of the spermatoproteasome, a form of the proteasome specifically found in testis. Autocleaved. The resulting N-terminal Thr residue of the mature subunit is responsible for the nucleophile proteolytic activity.

Its subcellular location is the cytoplasm. The protein localises to the nucleus. It catalyses the reaction Cleavage of peptide bonds with very broad specificity.. Functionally, the proteasome is a multicatalytic proteinase complex which is characterized by its ability to cleave peptides with Arg, Phe, Tyr, Leu, and Glu adjacent to the leaving group at neutral or slightly basic pH. The proteasome has an ATP-dependent proteolytic activity. This subunit is involved in antigen processing to generate class I binding peptides. This is Proteasome subunit beta type-10 (PSMB10) from Bos taurus (Bovine).